A 323-amino-acid chain; its full sequence is tRNA dimethylallyltransferase (323 aa).

21-28 serves as a coordination point for ATP; it reads GPTACNKS. 23–28 is a substrate binding site; the sequence is TACNKS. 3 interaction with substrate tRNA regions span residues 46–49, 171–175, and 252–257; these read DSAL, QRVLR, and RCVGYR.

It belongs to the IPP transferase family. As to quaternary structure, monomer. Mg(2+) is required as a cofactor.

It catalyses the reaction adenosine(37) in tRNA + dimethylallyl diphosphate = N(6)-dimethylallyladenosine(37) in tRNA + diphosphate. Its function is as follows. Catalyzes the transfer of a dimethylallyl group onto the adenine at position 37 in tRNAs that read codons beginning with uridine, leading to the formation of N6-(dimethylallyl)adenosine (i(6)A). The sequence is that of tRNA dimethylallyltransferase from Buchnera aphidicola subsp. Baizongia pistaciae (strain Bp).